The chain runs to 647 residues: Knirps-related protein (647 aa).

The segment at residues 11–87 (NQTCKVCGEP…VGMSKSGSRY (77 aa)) is a DNA-binding region (nuclear receptor). 2 NR C4-type zinc fingers span residues 14–34 (CKVC…CEGC) and 51–75 (CKNN…LKKC). 4 disordered regions span residues 111–142 (MAAH…KGMS), 196–274 (HKHP…LSPF), 340–383 (GAGQ…LLTN), and 402–600 (SQQQ…NSIL). Residues 120-134 (AGGGSSGGSGGGQGM) are compositionally biased toward gly residues. Composition is skewed to low complexity over residues 200–223 (VVAS…VSSV) and 232–247 (GGKS…ADGS). A compositionally biased stretch (gly residues) spans 248–260 (HSGGGGGGGGGVT). 2 stretches are compositionally biased toward polar residues: residues 370-381 (SPSTHANNNHLL) and 420-432 (DYSI…PNSE). 2 stretches are compositionally biased toward basic and acidic residues: residues 433-443 (SGRERVKSRQN) and 480-491 (QEERTPAGEDPR). Over residues 502-519 (LSMKTTGSSLSSKSSSPE) the composition is skewed to low complexity. The span at 520–541 (IEPETEISSDVEKNDTDDDDED) shows a compositional bias: acidic residues. Residues 542-556 (LKVTPEEEISVRETA) show a composition bias toward basic and acidic residues. The span at 567–579 (TTETAKTSIENTH) shows a compositional bias: polar residues. Residues 580–599 (NNNNSISNNNNNNNNNNNSI) are compositionally biased toward low complexity.

This sequence belongs to the nuclear hormone receptor family. NR0 subfamily.

The protein resides in the nucleus. The sequence is that of Knirps-related protein (knrl) from Drosophila melanogaster (Fruit fly).